The following is a 318-amino-acid chain: Aspartate carbamoyltransferase catalytic subunit (318 aa).

Carbamoyl phosphate-binding residues include arginine 58 and threonine 59. Lysine 86 serves as a coordination point for L-aspartate. Carbamoyl phosphate contacts are provided by arginine 108, histidine 141, and glutamine 144. Positions 174 and 226 each coordinate L-aspartate. 2 residues coordinate carbamoyl phosphate: glycine 270 and proline 271.

This sequence belongs to the aspartate/ornithine carbamoyltransferase superfamily. ATCase family. As to quaternary structure, heterododecamer (2C3:3R2) of six catalytic PyrB chains organized as two trimers (C3), and six regulatory PyrI chains organized as three dimers (R2).

It carries out the reaction carbamoyl phosphate + L-aspartate = N-carbamoyl-L-aspartate + phosphate + H(+). It participates in pyrimidine metabolism; UMP biosynthesis via de novo pathway; (S)-dihydroorotate from bicarbonate: step 2/3. In terms of biological role, catalyzes the condensation of carbamoyl phosphate and aspartate to form carbamoyl aspartate and inorganic phosphate, the committed step in the de novo pyrimidine nucleotide biosynthesis pathway. The polypeptide is Aspartate carbamoyltransferase catalytic subunit (Lactobacillus acidophilus (strain ATCC 700396 / NCK56 / N2 / NCFM)).